We begin with the raw amino-acid sequence, 178 residues long: Nascent polypeptide-associated complex subunit alpha (178 aa).

Residues 20-84 (SKNEKKAREL…AKVDDMNKRI (65 aa)) enclose the NAC-A/B domain. The span at 87–104 (AQAQQEQQEALTKAAADA) shows a compositional bias: low complexity. Residues 87–142 (AQAQQEQQEALTKAAADAETADKSPESITNDLQNASLEDKTVEEDEGEVDETGLDS) form a disordered region. Residues 112 to 122 (ESITNDLQNAS) are compositionally biased toward polar residues. Residues 127–139 (TVEEDEGEVDETG) are compositionally biased toward acidic residues. The UBA domain occupies 140 to 178 (LDSKDIEIIVEQTQVSRAKAVKALRAHKGDMVNAIMELS).

It belongs to the NAC-alpha family. In terms of assembly, part of the nascent polypeptide-associated complex (NAC), consisting of EGD2 and EGD1. NAC associates with ribosomes via EGD1.

It is found in the cytoplasm. Its subcellular location is the nucleus. Its function is as follows. Component of the nascent polypeptide-associated complex (NAC), a dynamic component of the ribosomal exit tunnel, protecting the emerging polypeptides from interaction with other cytoplasmic proteins to ensure appropriate nascent protein targeting. The NAC complex also promotes mitochondrial protein import by enhancing productive ribosome interactions with the outer mitochondrial membrane and blocks the inappropriate interaction of ribosomes translating non-secretory nascent polypeptides with translocation sites in the membrane of the endoplasmic reticulum. EGD2 may also be involved in transcription regulation. This Meyerozyma guilliermondii (strain ATCC 6260 / CBS 566 / DSM 6381 / JCM 1539 / NBRC 10279 / NRRL Y-324) (Yeast) protein is Nascent polypeptide-associated complex subunit alpha (EGD2).